A 545-amino-acid polypeptide reads, in one-letter code: Eukaryotic translation initiation factor 3 subunit D-2 (545 aa).

The segment covering 99 to 113 (FRGNIRNNPRTRGRT) has biased composition (basic residues). Residues 99-158 (FRGNIRNNPRTRGRTGRGGAVTGIGGNQPGVGVNERTKYGKGRDNRRQMGRRFGRNAPTR) are disordered. Positions 114–127 (GRGGAVTGIGGNQP) are enriched in gly residues. Over residues 133–145 (ERTKYGKGRDNRR) the composition is skewed to basic and acidic residues. Residues 287–301 (QFDLLTVNETALEPP) are RNA gate.

The protein belongs to the eIF-3 subunit D family. Component of the eukaryotic translation initiation factor 3 (eIF-3) complex. The eIF-3 complex interacts with pix.

The protein resides in the cytoplasm. Functionally, mRNA cap-binding component of the eukaryotic translation initiation factor 3 (eIF-3) complex, which is involved in protein synthesis of a specialized repertoire of mRNAs and, together with other initiation factors, stimulates binding of mRNA and methionyl-tRNAi to the 40S ribosome. The eIF-3 complex specifically targets and initiates translation of a subset of mRNAs involved in cell proliferation. In the eIF-3 complex, eif3d specifically recognizes and binds the 7-methylguanosine cap of a subset of mRNAs. This is Eukaryotic translation initiation factor 3 subunit D-2 from Drosophila persimilis (Fruit fly).